A 947-amino-acid polypeptide reads, in one-letter code: Microtubule cross-linking factor 3 (947 aa).

Positions 1 to 21 (MSQPPIGGAAPATAAASPAAA) are cleaved as a signal peptide. Disordered stretches follow at residues 1–251 (MSQP…SYWK), 266–368 (KERA…TLKN), and 496–524 (LSLK…DNED). 3 stretches are compositionally biased toward low complexity: residues 9–24 (AAPA…AATE), 72–81 (QQQLQQQQQQ), and 109–137 (APKG…ALGG). The segment covering 141–151 (GPPEEPPRELE) has biased composition (basic and acidic residues). Over residues 164–180 (GEGGGGGGEGGGAGGGS) the composition is skewed to gly residues. Residues 214 to 236 (ASPSPSSSSAGKTPGTGSRNSGS) are compositionally biased toward low complexity. The segment covering 237–248 (GVAGGGSGGGGS) has biased composition (gly residues). Composition is skewed to low complexity over residues 287 to 297 (SSRSSPVSGPP) and 304 to 325 (AVAS…AEGS). Residues 342–726 (HPQQLQEQEE…GKVMQLQYEN (385 aa)) adopt a coiled-coil conformation. 2 stretches are compositionally biased toward basic and acidic residues: residues 355–368 (EMEK…TLKN) and 496–513 (LSLK…EKKA). S569 bears the Phosphoserine mark. Positions 743–786 (GIRGSPRDSDAESDAGKKESDDDSRPPHRKREGPIGGESDSEEV) are disordered. Residues 747–768 (SPRDSDAESDAGKKESDDDSRP) are compositionally biased toward basic and acidic residues. Phosphoserine is present on S781. The stretch at 811–835 (DRQQMKDIRSEAERLGKTIDRLIAD) forms a coiled coil. Residues 915–935 (PIILLILILVLFSSLSYTTIF) form a helical membrane-spanning segment.

The protein belongs to the MTCL family.

Its subcellular location is the membrane. This Homo sapiens (Human) protein is Microtubule cross-linking factor 3.